Here is a 55-residue protein sequence, read N- to C-terminus: Cytochrome c oxidase subunit 7s (55 aa).

A helical transmembrane segment spans residues 13–35 (LVQDIGVALILGSIAGCFFKYGV).

As to quaternary structure, slime mold cytochrome c oxidase consists of at least seven different polypeptides species, subunits I, II, III, IV, V, VI, and VIIe/s in order of MW.

It localises to the mitochondrion inner membrane. It catalyses the reaction 4 Fe(II)-[cytochrome c] + O2 + 8 H(+)(in) = 4 Fe(III)-[cytochrome c] + 2 H2O + 4 H(+)(out). Its function is as follows. This protein is one of the nuclear-coded polypeptide chains of cytochrome c oxidase, the terminal oxidase in mitochondrial electron transport. The protein is Cytochrome c oxidase subunit 7s (cxgS) of Dictyostelium discoideum (Social amoeba).